Here is a 462-residue protein sequence, read N- to C-terminus: Semenogelin-1 (462 aa).

The first 23 residues, 1–23, serve as a signal peptide directing secretion; that stretch reads MKPNIIFVLSLLLILEKQAAVMG. Position 24 is a pyrrolidone carboxylic acid (glutamine 24). The segment at 24–61 is disordered; it reads QKGGSKGRLPSEFSQFPHGQKGQHYSGQKGKQQTESKG. Positions 46–61 are enriched in polar residues; that stretch reads QHYSGQKGKQQTESKG. 3 consecutive repeat copies span residues 70–129, 141–200, and 201–260. The repeat-rich region stretch occupies residues 70–439; it reads HVDANDHDQS…SHGGLDIVII (370 aa). Disordered regions lie at residues 131–157 and 173–194; these read KGGK…GISS and KEQT…QSSY. Residues 138 to 157 show a composition bias toward polar residues; that stretch reads GTQNPSQDQGNSPSGKGISS. The segment at 164–283 is interaction with EPPIN; that stretch reads ERLWVHGLSK…NQDQQHGRKA (120 aa). The segment at 261-380 is 2 X 60 AA tandem repeats, type 1; sequence LVYNKNQHQT…QRSIYSQTEK (120 aa). A disordered region spans residues 270–432; the sequence is TKNLNQDQQH…KGRHQHGSHG (163 aa). Polar residues-rich tracts occupy residues 308-317, 324-335, and 343-352; these read DVSQSSIYSQ, GKSQKQITIPSQ, and ANKISYQSSS. Residues 381–439 form a 3-2 repeat; sequence LVAGKSQIQAPNPKQEPWHGENAKGESGQSTNREQDLLSHEQKGRHQHGSHGGLDIVII. The segment covering 413-424 has biased composition (basic and acidic residues); it reads REQDLLSHEQKG.

It belongs to the semenogelin family. Occurs in disulfide-linked complexes which may also contain two less abundant 71- and 76-kDa semenogelin-related polypeptides. Interacts with EPPIN (via C-terminus); Cys-239 is a critical amino acid for both binding to EPPIN. In terms of processing, transglutaminase substrate. Post-translationally, rapidly cleaved after ejaculation by KLK3/PSA, resulting in liquefaction of the semen coagulum and the progressive release of motile spermatozoa. Seminal vesicle.

It is found in the secreted. Its function is as follows. Predominant protein in semen. It participates in the formation of a gel matrix entrapping the accessory gland secretions and ejaculated spermatozoa. Fragments of semenogelin and/or fragments of the related proteins may contribute to the activation of progressive sperm movements as the gel-forming proteins are fragmented by KLK3/PSA. In terms of biological role, alpha-inhibin-92 and alpha-inhibin-31, derived from the proteolytic degradation of semenogelin, inhibit the secretion of pituitary follicle-stimulating hormone. The protein is Semenogelin-1 (SEMG1) of Homo sapiens (Human).